We begin with the raw amino-acid sequence, 269 residues long: Ribosomal RNA small subunit methyltransferase A (269 aa).

S-adenosyl-L-methionine contacts are provided by Asn-11, Leu-13, Gly-37, Glu-57, Asp-85, and Asn-104.

This sequence belongs to the class I-like SAM-binding methyltransferase superfamily. rRNA adenine N(6)-methyltransferase family. RsmA subfamily.

Its subcellular location is the cytoplasm. The catalysed reaction is adenosine(1518)/adenosine(1519) in 16S rRNA + 4 S-adenosyl-L-methionine = N(6)-dimethyladenosine(1518)/N(6)-dimethyladenosine(1519) in 16S rRNA + 4 S-adenosyl-L-homocysteine + 4 H(+). Specifically dimethylates two adjacent adenosines (A1518 and A1519) in the loop of a conserved hairpin near the 3'-end of 16S rRNA in the 30S particle. May play a critical role in biogenesis of 30S subunits. In Campylobacter hominis (strain ATCC BAA-381 / DSM 21671 / CCUG 45161 / LMG 19568 / NCTC 13146 / CH001A), this protein is Ribosomal RNA small subunit methyltransferase A.